We begin with the raw amino-acid sequence, 324 residues long: Pepsin-2B (324 aa).

In terms of domain architecture, Peptidase A1 spans 14–321; it reads YYGVISIGTP…DRTNNKVGFA (308 aa). The active site involves aspartate 32. Residues cysteine 45 and cysteine 50 are joined by a disulfide bond. A disordered region spans residues 86-109; the sequence is QDTVSVGGGSDPNQELGESQTEPG. Polar residues predominate over residues 96–107; sequence DPNQELGESQTE. The cysteines at positions 206 and 209 are disulfide-linked. Aspartate 214 is a catalytic residue. Cysteine 247 and cysteine 280 are disulfide-bonded.

The protein belongs to the peptidase A1 family.

This is Pepsin-2B from Gadus morhua (Atlantic cod).